Here is a 106-residue protein sequence, read N- to C-terminus: UPF0145 protein AZOSEA16190 (106 aa).

Belongs to the UPF0145 family.

The protein is UPF0145 protein AZOSEA16190 of Aromatoleum aromaticum (strain DSM 19018 / LMG 30748 / EbN1) (Azoarcus sp. (strain EbN1)).